Reading from the N-terminus, the 340-residue chain is Alcohol dehydrogenase (340 aa).

Cys37, His58, Cys89, Cys92, Cys95, Cys103, and Cys145 together coordinate Zn(2+).

This sequence belongs to the zinc-containing alcohol dehydrogenase family. Zn(2+) serves as cofactor.

The catalysed reaction is a primary alcohol + NAD(+) = an aldehyde + NADH + H(+). The enzyme catalyses a secondary alcohol + NAD(+) = a ketone + NADH + H(+). This chain is Alcohol dehydrogenase (adh), found in Staphylococcus epidermidis (strain ATCC 35984 / DSM 28319 / BCRC 17069 / CCUG 31568 / BM 3577 / RP62A).